The following is a 524-amino-acid chain: MSDRVIIFDTTLRDGEQALAASLTVKEKLQIAQALERLGVDIMEVGFPVSSPGDFQSVQTIARHIKNSRVCALARALPQDIDAAGEALRVAEAFRIHTFISTSSIHVESKLKKSFEDVLEMGVSAIKHALRYTDDVEFSCEDAGRTPIDNLCRMVEAAIKAGARTINIPDTVGYTVPTEFSGIIQTLFNRVPNIDKAIISVHCHDDLGLSVANSIGAVQMGARQIECTINGIGERAGNCSLEEVAMILKTRADLLGVHTNIRHSEIHRTSALVSQLCNMPVQPNKAIVGANAFSHSSGIHQDGVLKAKNTYEIITPESIGLPQNNLNMTSRSGRHVIKHRMESMGYAESSYDLDHLYGKFLTLADKKGQVFDYDLEALAFFSQIHEEPEHFKLEYLGVQSGSSVLATASVKLKVGQDLVCEAATGNGPVDAVYQCINRITGYEIRIDKYALKAKGEGKNALGQVDIVAEYKGRKFHGMGLATDIIESSAQALIHVINSIWRADQVAEQMERNVTKTDKINTESV.

The Pyruvate carboxyltransferase domain occupies 5–267 (VIIFDTTLRD…HTNIRHSEIH (263 aa)). Mn(2+) contacts are provided by D14, H202, H204, and N238. Residues 392-524 (KLEYLGVQSG…KTDKINTESV (133 aa)) are regulatory domain.

The protein belongs to the alpha-IPM synthase/homocitrate synthase family. LeuA type 1 subfamily. In terms of assembly, homodimer. It depends on Mn(2+) as a cofactor.

It localises to the cytoplasm. The enzyme catalyses 3-methyl-2-oxobutanoate + acetyl-CoA + H2O = (2S)-2-isopropylmalate + CoA + H(+). It functions in the pathway amino-acid biosynthesis; L-leucine biosynthesis; L-leucine from 3-methyl-2-oxobutanoate: step 1/4. In terms of biological role, catalyzes the condensation of the acetyl group of acetyl-CoA with 3-methyl-2-oxobutanoate (2-ketoisovalerate) to form 3-carboxy-3-hydroxy-4-methylpentanoate (2-isopropylmalate). The protein is 2-isopropylmalate synthase of Aeromonas salmonicida (strain A449).